Here is a 122-residue protein sequence, read N- to C-terminus: Holo-[acyl-carrier-protein] synthase (122 aa).

Asp-9 and Glu-58 together coordinate Mg(2+).

It belongs to the P-Pant transferase superfamily. AcpS family. Mg(2+) serves as cofactor.

Its subcellular location is the cytoplasm. It catalyses the reaction apo-[ACP] + CoA = holo-[ACP] + adenosine 3',5'-bisphosphate + H(+). Transfers the 4'-phosphopantetheine moiety from coenzyme A to a Ser of acyl-carrier-protein. The chain is Holo-[acyl-carrier-protein] synthase from Chlamydia caviae (strain ATCC VR-813 / DSM 19441 / 03DC25 / GPIC) (Chlamydophila caviae).